The primary structure comprises 67 residues: Small ribosomal subunit protein eS27 (67 aa).

Zn(2+) contacts are provided by Cys22, Cys25, Cys41, and Cys44. A C4-type zinc finger spans residues 22–44; sequence CPDCGNEQVVFSHAAMVVRCLVC.

This sequence belongs to the eukaryotic ribosomal protein eS27 family. Part of the 30S ribosomal subunit. Requires Zn(2+) as cofactor.

The sequence is that of Small ribosomal subunit protein eS27 from Pyrobaculum islandicum (strain DSM 4184 / JCM 9189 / GEO3).